Here is a 395-residue protein sequence, read N- to C-terminus: Elongation factor Tu (395 aa).

Positions 10–204 (KPHVNIGTIG…AVDSYIPTPQ (195 aa)) constitute a tr-type G domain. The tract at residues 19 to 26 (GHVDHGKT) is G1. 19–26 (GHVDHGKT) is a binding site for GTP. Threonine 26 contributes to the Mg(2+) binding site. The G2 stretch occupies residues 60 to 64 (GITIN). Residues 81-84 (DCPG) are G3. GTP contacts are provided by residues 81–85 (DCPGH) and 136–139 (NKCD). The tract at residues 136–139 (NKCD) is G4. The G5 stretch occupies residues 174–176 (SAL).

This sequence belongs to the TRAFAC class translation factor GTPase superfamily. Classic translation factor GTPase family. EF-Tu/EF-1A subfamily. Monomer.

It is found in the cytoplasm. It catalyses the reaction GTP + H2O = GDP + phosphate + H(+). GTP hydrolase that promotes the GTP-dependent binding of aminoacyl-tRNA to the A-site of ribosomes during protein biosynthesis. The polypeptide is Elongation factor Tu (Symbiobacterium thermophilum (strain DSM 24528 / JCM 14929 / IAM 14863 / T)).